A 229-amino-acid polypeptide reads, in one-letter code: Potassium/proton antiporter CemA (229 aa).

The next 4 membrane-spanning stretches (helical) occupy residues 7 to 27 (LASL…SLSF), 106 to 126 (IILH…YFFL), 154 to 174 (ILLV…ELMI), and 189 to 209 (IISG…KYWI).

The protein belongs to the CemA family.

It is found in the plastid. It localises to the chloroplast inner membrane. The catalysed reaction is K(+)(in) + H(+)(out) = K(+)(out) + H(+)(in). Functionally, contributes to K(+)/H(+) antiport activity by supporting proton efflux to control proton extrusion and homeostasis in chloroplasts in a light-dependent manner to modulate photosynthesis. Prevents excessive induction of non-photochemical quenching (NPQ) under continuous-light conditions. Indirectly promotes efficient inorganic carbon uptake into chloroplasts. This chain is Potassium/proton antiporter CemA, found in Phalaenopsis aphrodite subsp. formosana (Moth orchid).